A 152-amino-acid chain; its full sequence is Superoxide dismutase [Cu-Zn] 2 (152 aa).

Residues His45, His47, and His62 each coordinate Cu cation. Cysteines 56 and 145 form a disulfide. Residues His62, His70, His79, and Asp82 each coordinate Zn(2+). His119 provides a ligand contact to Cu cation.

It belongs to the Cu-Zn superoxide dismutase family. As to quaternary structure, homodimer. Requires Cu cation as cofactor. Zn(2+) serves as cofactor.

It is found in the cytoplasm. The enzyme catalyses 2 superoxide + 2 H(+) = H2O2 + O2. Destroys radicals which are normally produced within the cells and which are toxic to biological systems. This Solanum lycopersicum (Tomato) protein is Superoxide dismutase [Cu-Zn] 2 (SODCC.5).